A 141-amino-acid chain; its full sequence is MGLRSCTHLATLFMTLWAVAFCFLVVVPIPAQTTSLQNAKDDRRLQELESKIGAESDQTNANLVGPSFSRFGDRRNQKAISFGRRVPLISRPMIPIELDLLMDNDDERTKAKRFDDYGHMRFGKRGGDDQFDDYGHMRFGR.

The first 31 residues, Met-1–Ala-31, serve as a signal peptide directing secretion. A propeptide spanning residues Gln-32–Asp-73 is cleaved from the precursor. Phe-82 carries the post-translational modification Phenylalanine amide. A propeptide spanning residues Val-86–Ala-111 is cleaved from the precursor. At Tyr-117 the chain carries Sulfotyrosine. Residue Phe-122 is modified to Phenylalanine amide. At Tyr-134 the chain carries Sulfotyrosine. At Phe-139 the chain carries Phenylalanine amide.

The protein belongs to the gastrin/cholecystokinin family.

It localises to the secreted. Drosulfakinin-0 (DSK 0) plays diverse biological roles including regulating gut muscle contraction in adults but not in larvae. The sequence is that of Drosulfakinins from Drosophila simulans (Fruit fly).